A 318-amino-acid chain; its full sequence is MNTRNRVVNSGLGASPASRPTRDPQDPSGRQGELSPVEDQREGLEAAPKGPSRESVVHAGQRRTSAYTLIAPNINRRNEIQRIAEQELANLEKWKEQNRAKPVHLVPRRLGGSQSETEVRQKQQLQLMQSKYKQKLKREESVRIKKEAEEAELQKMKAIQREKSNKLEEKKRLQENLRREAFREHQQYKTAEFLSKLNTESPDRSACQSAVCGPQSSTWKLPILPRDHSWARSWAYRDSLKAEENRKLQKMKDEQHQKSELLELKRQQQEQERAKIHQTEHRRVNNAFLDRLQGKSQPGGLEQSGGCWNMNSGNSWGI.

The disordered stretch occupies residues 1–60; sequence MNTRNRVVNSGLGASPASRPTRDPQDPSGRQGELSPVEDQREGLEAAPKGPSRESVVHAG. Coiled-coil stretches lie at residues 73-188 and 240-280; these read NINR…HQQY and LKAE…HQTE.

In terms of tissue distribution, highly expressed in placenta, small intestine, spleen, kidney, thymus, liver, salivary gland and testes. Weakly expressed in breast, skeletal muscle and colon. Highly expressed in breast cancer upon interaction between tumor cells and stromal cells in vitro. Expressed in blood mononuclear cells from patients with systemic lupus erythematosus (SLE).

In terms of biological role, plays a role in M1 macrophage polarization and is required for the proper regulation of gene expression during M1 versus M2 macrophage differentiation. Might play a role in RELA/p65 and STAT1 phosphorylation and nuclear localization upon activation of macrophages. This chain is Epithelial-stromal interaction protein 1 (EPSTI1), found in Homo sapiens (Human).